Reading from the N-terminus, the 1342-residue chain is DNA-directed RNA polymerase subunit beta (1342 aa).

The protein belongs to the RNA polymerase beta chain family. In terms of assembly, the RNAP catalytic core consists of 2 alpha, 1 beta, 1 beta' and 1 omega subunit. When a sigma factor is associated with the core the holoenzyme is formed, which can initiate transcription.

The catalysed reaction is RNA(n) + a ribonucleoside 5'-triphosphate = RNA(n+1) + diphosphate. Its function is as follows. DNA-dependent RNA polymerase catalyzes the transcription of DNA into RNA using the four ribonucleoside triphosphates as substrates. The polypeptide is DNA-directed RNA polymerase subunit beta (Pseudoalteromonas atlantica (strain T6c / ATCC BAA-1087)).